Reading from the N-terminus, the 1217-residue chain is MTIPEKPQGVIWTDAQWQSIYATGQDVLVAAAAGSGKTAVLVERIIQKILRDGIDVDRLLVVTFTNLSAREMKHRVDQRIQEASIADPANAHLKNQRIKIHQAQISTLHSFCLKLIQQHYDVLNIDPNFRTSSEAENILLLEQTIDEVIEQHYDILDPAFIELTEQLSSDRSDDQFRMIIKQLYFFSVANPNPTNWLDQLVTPYEEEAQQAQLIQLLTDLSKVFITAAYDALNKAYDLFSMMDSVDKHLAVIEDERRLMGRVLEGGFIDIPYLTGHEFGARLPNVTAKIKEANEMMVDALEDAKLQYKKYKSLIDKVKSDYFSREADDLKADMQQLAPRVKYLARIVKDVMSEFNRKKRSKNILDFSDYEHFALQILTNEDGSPSEIAESYRQHFQEILVDEYQDTNRVQEKILSCIKTGDEHNGNLFMVGDVKQSIYKFRQADPSLFIEKYQRFTIDGDGTGRRIDLSQNFRSRKEVLSTTNYIFKHMMDEQVGEVKYDEAAQLYYGAPYDESDHPVNLKVLVEADQEHSDLTGSEQEAHFIVEQVKDILEHQKVYDMKTGSYRSATYKDIVILERSFGQARNLQQAFKNEDIPFHVNSREGYFEQTEVRLVLSFLRAIDNPLQDIYLVGLMRSVIYQFKEDELAQIRILSPNDDYFYQSIVNYINDEAADAILVDKLKMFLSDIQSYQQYSKDHPVYQLIDKFYNDHYVIQYFSGLIGGRGRRANLYGLFNKAIEFENSSFRGLYQFIRFIDELIERGKDFGEENVVGPNDNVVRMMTIHSSKGLEFPFVIYSGLSKDFNKRDLKQPVILNQQFGLGMDYFDVDKEMAFPSLASVAYRAVAEKELVSEEMRLVYVALTRAKEQLYLIGRVKNDKSLLELEQLSISGEHIAVNERLTSPNPFHLIYSILSKHQSASIPDDLKFEKDIAQIEDSSRPNVNISIVYFEDVSTETILDNDEYRSVNQLETMQNGNEDVKAQIKHQLDYRYPYVNDTKKPSKQSVSELKRQYETEESGTSYERVRQYRIGFSTYERPKFLSEQGKRKANEIGTLMHTVMQHLPFKKERISEVELHQYIDGLIDKHIIEADAKKDIRMDEIMTFINSELYSIIAEAEQVYRELPFVVNQALVDQLPQGDEDVSIIQGMIDLIFVKDGVHYFVDYKTDAFNRRRGMTDEEIGTQLKNKYKIQMKYYQNTLQTILNKEVKGYLYFFKFGTLQL.

In terms of domain architecture, UvrD-like helicase ATP-binding spans 10-475 (VIWTDAQWQS…IDLSQNFRSR (466 aa)). 31–38 (AAAGSGKT) contacts ATP. Residues 476-786 (KEVLSTTNYI…RMMTIHSSKG (311 aa)) form the UvrD-like helicase C-terminal domain.

The protein belongs to the helicase family. AddA subfamily. Heterodimer of AddA and AddB/RexB. The cofactor is Mg(2+).

It catalyses the reaction Couples ATP hydrolysis with the unwinding of duplex DNA by translocating in the 3'-5' direction.. The enzyme catalyses ATP + H2O = ADP + phosphate + H(+). In terms of biological role, the heterodimer acts as both an ATP-dependent DNA helicase and an ATP-dependent, dual-direction single-stranded exonuclease. Recognizes the chi site generating a DNA molecule suitable for the initiation of homologous recombination. The AddA nuclease domain is required for chi fragment generation; this subunit has the helicase and 3' -&gt; 5' nuclease activities. This chain is ATP-dependent helicase/nuclease subunit A, found in Staphylococcus aureus (strain NCTC 8325 / PS 47).